Here is a 721-residue protein sequence, read N- to C-terminus: Dolichyl-diphosphooligosaccharide--protein glycosyltransferase subunit STT3B (721 aa).

Residues 1–25 lie on the Cytoplasmic side of the membrane; it reads MAAATALDSLPAPLRSLRLKTKQQE. Residues 26–46 traverse the membrane as a helical segment; that stretch reads LLLRVSALALIYVLAFVVRLF. Over 47 to 129 the chain is Lumenal; that stretch reads SVLRYESMIH…VHIREVCVLT (83 aa). The DXD motif 1 motif lies at 57–59; that stretch reads EFD. Position 59 (Asp-59) interacts with Mn(2+). The helical transmembrane segment at 130–148 threads the bilayer; it reads APFFAANTTLVAYAFGREI. Over 149 to 150 the chain is Cytoplasmic; that stretch reads WD. Residues 151–168 traverse the membrane as a helical segment; sequence SGAGLVAAALIAVCPGYI. At 169-179 the chain is on the lumenal side; the sequence is SRSVAGSYDNE. Positions 177 and 179 each coordinate Mn(2+). A DXD motif 2 motif is present at residues 177–179; that stretch reads DNE. A helical membrane pass occupies residues 180–199; it reads GVAIFALLLTFYLFVRAVNT. Residues 200–201 are Cytoplasmic-facing; the sequence is GS. The chain crosses the membrane as a helical span at residues 202 to 216; that stretch reads LAWSLASAFGYFYMV. Over 217–221 the chain is Lumenal; that stretch reads SAWGG. The chain crosses the membrane as a helical span at residues 222-238; that stretch reads YVFIINLLPLYVLVLLV. Residues 239–243 are Cytoplasmic-facing; the sequence is TGRYS. Residues 244–269 form a helical membrane-spanning segment; sequence QRLYVAYNSTYVLGMLLAMQIRFVGF. The Lumenal portion of the chain corresponds to 270–277; the sequence is QHVQSGEH. Residues 278 to 297 form a helical membrane-spanning segment; sequence MAAMGVFFLLQVFFFLDWVK. At 298–313 the chain is on the cytoplasmic side; sequence YLLNDAKLFKSFLRIT. A helical transmembrane segment spans residues 314–334; sequence LTCVITVGTLALGIGTASGYI. Residues 335–367 lie on the Lumenal side of the membrane; the sequence is SPWTGRFYSLLDPTYAKDHIPIIASVSEHQPTA. The SVSE motif signature appears at 359 to 362; that stretch reads SVSE. The chain crosses the membrane as a helical span at residues 368-390; it reads WSSFMFDFHILLFLFPAGLYFCF. Topologically, residues 391 to 396 are cytoplasmic; it reads KRLSDA. The helical transmembrane segment at 397 to 413 threads the bilayer; it reads TIFIVMYGLTSMYFAGV. Residues 414-417 lie on the Lumenal side of the membrane; that stretch reads MVRL. Residue Arg-416 participates in dolichyl diphosphooligosaccharide binding. A helical membrane pass occupies residues 418–439; sequence ILVAAPAVCLISAIAASATIKN. At 440-471 the chain is on the cytoplasmic side; sequence LTTLIRTKSKSPQTVSGKSSGSKAAAKGAVDQ. The chain crosses the membrane as a helical span at residues 472-492; sequence SLPFQQNVAIALLLGAFYLLS. At 493–721 the chain is on the lumenal side; the sequence is RYAVHCTWVT…YKVKPPKNRS (229 aa). An interacts with target acceptor peptide in protein substrate region spans residues 548–550; it reads WWD. A WWDYG motif motif is present at residues 548 to 552; sequence WWDYG. Tyr-553 serves as a coordination point for dolichyl diphosphooligosaccharide. Asn-560 and Asn-567 each carry an N-linked (GlcNAc...) asparagine glycan. An N-linked (GlcNAc...) (high mannose) asparagine glycan is attached at Asn-571. A DK motif motif is present at residues 615–622; the sequence is DINKFLWM.

Belongs to the STT3 family. As to quaternary structure, component of the oligosaccharyltransferase (OST) complex. The cofactor is Mg(2+). Requires Mn(2+) as cofactor.

Its subcellular location is the endoplasmic reticulum membrane. It carries out the reaction a di-trans,poly-cis-dolichyl diphosphooligosaccharide + L-asparaginyl-[protein] = N(4)-(oligosaccharide-(1-&gt;4)-N-acetyl-beta-D-glucosaminyl-(1-&gt;4)-N-acetyl-beta-D-glucosaminyl)-L-asparaginyl-[protein] + a di-trans,poly-cis-dolichyl diphosphate + H(+). Its pathway is protein modification; protein glycosylation. Functionally, catalytic subunit of the oligosaccharyl transferase (OST) complex that catalyzes the initial transfer of a defined glycan (Glc(3)Man(9)GlcNAc(2) in eukaryotes) from the lipid carrier dolichol-pyrophosphate to an asparagine residue within an Asn-X-Ser/Thr consensus motif in nascent polypeptide chains, the first step in protein N-glycosylation. N-glycosylation occurs cotranslationally and the complex associates with the Sec61 complex at the channel-forming translocon complex that mediates protein translocation across the endoplasmic reticulum (ER). All subunits are required for a maximal enzyme activity. This subunit contains the active site and the acceptor peptide and donor lipid-linked oligosaccharide (LLO) binding pockets. The chain is Dolichyl-diphosphooligosaccharide--protein glycosyltransferase subunit STT3B (STT3B) from Oryza sativa subsp. japonica (Rice).